The following is a 520-amino-acid chain: NAD(P)H-quinone oxidoreductase subunit 2 (520 aa).

A run of 14 helical transmembrane segments spans residues 15–35 (ILPE…DLIL), 42–62 (WIGY…YFQW), 79–99 (LSII…LMSI), 106–126 (GTAL…GMFV), 132–152 (LVMI…LTGY), 167–187 (LLIG…LYGL), 210–230 (LGAV…ISAA), 244–264 (PTPV…ALAI), 280–300 (FVFT…ALAQ), 306–326 (MLAY…IAGT), 334–354 (IFYL…IILF), 378–398 (LGLS…GFFG), 400–420 (IYLF…LGLV), and 466–486 (VGLV…NPLF).

This sequence belongs to the complex I subunit 2 family. As to quaternary structure, NDH-1 can be composed of about 15 different subunits; different subcomplexes with different compositions have been identified which probably have different functions.

It is found in the cellular thylakoid membrane. The catalysed reaction is a plastoquinone + NADH + (n+1) H(+)(in) = a plastoquinol + NAD(+) + n H(+)(out). It catalyses the reaction a plastoquinone + NADPH + (n+1) H(+)(in) = a plastoquinol + NADP(+) + n H(+)(out). Functionally, NDH-1 shuttles electrons from an unknown electron donor, via FMN and iron-sulfur (Fe-S) centers, to quinones in the respiratory and/or the photosynthetic chain. The immediate electron acceptor for the enzyme in this species is believed to be plastoquinone. Couples the redox reaction to proton translocation, and thus conserves the redox energy in a proton gradient. Cyanobacterial NDH-1 also plays a role in inorganic carbon-concentration. The sequence is that of NAD(P)H-quinone oxidoreductase subunit 2 from Trichormus variabilis (strain ATCC 29413 / PCC 7937) (Anabaena variabilis).